A 468-amino-acid polypeptide reads, in one-letter code: Serine--tRNA ligase (468 aa).

Position 272-274 (272-274) interacts with L-serine; it reads TAE. 303–305 is a binding site for ATP; that stretch reads RAE. E326 is a binding site for L-serine. 390-393 is an ATP binding site; that stretch reads EISS. S426 lines the L-serine pocket.

It belongs to the class-II aminoacyl-tRNA synthetase family. Type-1 seryl-tRNA synthetase subfamily. In terms of assembly, homodimer. The tRNA molecule binds across the dimer.

It localises to the cytoplasm. It carries out the reaction tRNA(Ser) + L-serine + ATP = L-seryl-tRNA(Ser) + AMP + diphosphate + H(+). It catalyses the reaction tRNA(Sec) + L-serine + ATP = L-seryl-tRNA(Sec) + AMP + diphosphate + H(+). It functions in the pathway aminoacyl-tRNA biosynthesis; selenocysteinyl-tRNA(Sec) biosynthesis; L-seryl-tRNA(Sec) from L-serine and tRNA(Sec): step 1/1. Its function is as follows. Catalyzes the attachment of serine to tRNA(Ser). Is also able to aminoacylate tRNA(Sec) with serine, to form the misacylated tRNA L-seryl-tRNA(Sec), which will be further converted into selenocysteinyl-tRNA(Sec). The chain is Serine--tRNA ligase from Xanthobacter autotrophicus (strain ATCC BAA-1158 / Py2).